Here is a 276-residue protein sequence, read N- to C-terminus: Urease accessory protein UreD (276 aa).

Belongs to the UreD family. In terms of assembly, ureD, UreF and UreG form a complex that acts as a GTP-hydrolysis-dependent molecular chaperone, activating the urease apoprotein by helping to assemble the nickel containing metallocenter of UreC. The UreE protein probably delivers the nickel.

It localises to the cytoplasm. In terms of biological role, required for maturation of urease via the functional incorporation of the urease nickel metallocenter. This is Urease accessory protein UreD from Polaromonas naphthalenivorans (strain CJ2).